Consider the following 586-residue polypeptide: Kelch-like protein 7 (586 aa).

In terms of domain architecture, BTB spans 44 to 111 (CDVILMVQER…AYTARISVNS (68 aa)). A BACK domain is found at 146–248 (CLGISVLAEC…SKNFLSKTVQ (103 aa)). 6 Kelch repeats span residues 294–336 (RIAL…FWDN), 337–382 (VVYI…AAEG), 383–430 (KIYT…EANG), 431–481 (LIYV…FVKD), 483–528 (IFAV…AVGS), and 530–575 (VYVL…CVVD).

As to quaternary structure, homodimer. Component of the BCR(KLHL7) E3 ubiquitin ligase complex.

Its subcellular location is the nucleus. It localises to the cytoplasm. The protein operates within protein modification; protein ubiquitination. Substrate-specific adapter of a BCR (BTB-CUL3-RBX1) E3 ubiquitin ligase complex. The BCR(KLHL7) complex acts by mediating ubiquitination and subsequent degradation of substrate proteins. Probably mediates 'Lys-48'-linked ubiquitination. The chain is Kelch-like protein 7 (KLHL7) from Gallus gallus (Chicken).